A 314-amino-acid chain; its full sequence is tRNA pseudouridine synthase B (314 aa).

D41 acts as the Nucleophile in catalysis.

It belongs to the pseudouridine synthase TruB family. Type 1 subfamily.

The catalysed reaction is uridine(55) in tRNA = pseudouridine(55) in tRNA. Functionally, responsible for synthesis of pseudouridine from uracil-55 in the psi GC loop of transfer RNAs. In Prochlorococcus marinus (strain NATL1A), this protein is tRNA pseudouridine synthase B.